The primary structure comprises 1185 residues: MQLKSLEISGFKSFADKTKIDFQAGMTGIVGPNGSGKSNIIEAIRWVLGEQAVKSLRGTKMTDVIFAGSANRKPLNMAKVTITFDNSDHFLPLDYAEVSITRKLFRNGDSDYLINNQSCRLKDITNLMIDTGLGKDSFSVISQGRVEAVFNAKPEERRSIIEDVAGVLKYKKDKFTTENKLAETTDYLDRVNDIIAELNQQKGPLEEQASLARDYQDQKQKFDYLDRSRLVKKLTIARDQLQGVNEKLASAKALVAKYQQQVDAGATKLANLKTQQTAQLKQKDELVAQNLELIKTIENTQGQQGVDAERRQNQQSEQERLTASLTATEQQIATQTEQQTQLEQTLSEQQAQVKAVKAQVAELTTATSAAGRQQLADELEKLRNAYIDEKQVQAELNNEAKNLVKQHQQSGSQSTALAERLAQAQANLKRVQTTVDVHNREQRDLENQVSQQQATLTAQQAQVKTNAERIDEQQQRWLDAAGLMQREKSRLEALQAVQERYTNFYAGVRMVLQHRQQFSGVAGAVSELLTVPDQYTKAVEVALGGQLQNIVCDTQQTAKTVVNFLKQNHAGRATFLPIERITARQLPVNTERDLSQQPGVLGVASELVDCESRLTAIKRYLLGTTAIVDTLDHAMAISRSRRFRCKLVTIDGETIAASGAITGGATRHDDNGLLQQQQSAEKIAANVAQMQSELVTYEQGLADLKKANQDLTVQVETTRQQLSELKDRLSQTQAQLQAAQSEQTQLSRQVKALTYEQQQTQADDSYEDLVARNQQAQAANAAKLKDYQDQMKTVQQQQTDYESYQQTQTTKLQAQREQLITLQEHVKQTQRQLEQCQATLAQNEETKKQIQADLTAIKTTLASQQMSVAERDTVLKTAKAKQAAVEEQRKTCEQQLATLNDQVEELSTQQVRLQQLAAAATDDYRRLELSQTKLTGEVDHATADLAEKYQLTVAAAQADVSGLALPAITEQLKLLKRGLDEIGTVNLGAIDEFERVKERFDFLNNQASDLTEAKEHLLQTMADLDTTVATRFKTAFDQVASEFSTIFEQMFGGGKAELILTDPEHLLTSGVDIMAQPPGKKFQRLSLLSGGERALTAITLLFAILAVRPVPFSILDEAEAALDDANVDRFSQYLNDFQTGTQFVIITHRKGTMMHADVLYGVTMEESGVSKMVSVSLADLKDEQK.

Position 32–39 (32–39 (PNGSGKSN)) interacts with ATP. The stretch at 228 to 503 (SRLVKKLTIA…LQAVQERYTN (276 aa)) forms a coiled coil. The interval 300–323 (TQGQQGVDAERRQNQQSEQERLTA) is disordered. A compositionally biased stretch (basic and acidic residues) spans 307-320 (DAERRQNQQSEQER). An SMC hinge domain is found at 519–637 (SGVAGAVSEL…VDTLDHAMAI (119 aa)). Coiled-coil stretches lie at residues 675–928 (QQQQ…RRLE) and 989–1025 (AIDE…ADLD).

Belongs to the SMC family. In terms of assembly, homodimer.

Its subcellular location is the cytoplasm. Its function is as follows. Required for chromosome condensation and partitioning. The protein is Chromosome partition protein Smc of Lactiplantibacillus plantarum (strain ATCC BAA-793 / NCIMB 8826 / WCFS1) (Lactobacillus plantarum).